A 258-amino-acid chain; its full sequence is Pimeloyl-[acyl-carrier protein] methyl ester esterase (258 aa).

Residues Leu-16–Glu-244 form the AB hydrolase-1 domain. Substrate is bound by residues Trp-22, Ser-82–Leu-83, and Phe-146–Gln-150. The active-site Nucleophile is the Ser-82. Residues Asp-210 and His-238 contribute to the active site. His-238 is a substrate binding site.

The protein belongs to the AB hydrolase superfamily. Carboxylesterase BioH family. Monomer.

The protein resides in the cytoplasm. It carries out the reaction 6-carboxyhexanoyl-[ACP] methyl ester + H2O = 6-carboxyhexanoyl-[ACP] + methanol + H(+). It participates in cofactor biosynthesis; biotin biosynthesis. Functionally, the physiological role of BioH is to remove the methyl group introduced by BioC when the pimeloyl moiety is complete. It allows to synthesize pimeloyl-ACP via the fatty acid synthetic pathway through the hydrolysis of the ester bonds of pimeloyl-ACP esters. The polypeptide is Pimeloyl-[acyl-carrier protein] methyl ester esterase (Vibrio atlanticus (strain LGP32) (Vibrio splendidus (strain Mel32))).